A 99-amino-acid chain; its full sequence is Large ribosomal subunit protein uL23 (99 aa).

It belongs to the universal ribosomal protein uL23 family. As to quaternary structure, part of the 50S ribosomal subunit. Contacts protein L29, and trigger factor when it is bound to the ribosome.

One of the early assembly proteins it binds 23S rRNA. One of the proteins that surrounds the polypeptide exit tunnel on the outside of the ribosome. Forms the main docking site for trigger factor binding to the ribosome. This Pseudomonas fluorescens (strain SBW25) protein is Large ribosomal subunit protein uL23.